The primary structure comprises 262 residues: Fibroin light chain (262 aa).

The N-terminal stretch at 1–16 (MKPIFLVLLVATSAYA) is a signal peptide. N-acetylserine; in short form is present on Ser-19. Residues Cys-101 and Cys-160 are joined by a disulfide bond.

Silk fibroin elementary unit consists in a disulfide-linked heavy and light chain and a p25 glycoprotein in molar ratios of 6:6:1. This results in a complex of approximately 2.3 MDa. In terms of processing, the interchain disulfide bridge is essential for the intracellular transport and secretion of fibroin. Post-translationally, partially N-terminally processed to yield a short form which lacks the first two residues of the long form. In terms of tissue distribution, produced exclusively in the posterior (PSG) section of silk glands, which are essentially modified salivary glands.

The protein localises to the secreted. It is likely that the major role of L-chain is to prevent the retention of H-chain in ER by forming the disulfide linkage. This chain is Fibroin light chain (FIBL), found in Bombyx mori (Silk moth).